The primary structure comprises 131 residues: Dihydroneopterin aldolase 2 (131 aa).

Residues glutamate 29, tyrosine 61, and 80–81 (LE) each bind substrate. Residue lysine 107 is the Proton donor/acceptor of the active site.

This sequence belongs to the DHNA family. In terms of assembly, homooctamer. Forms a hollow cylinder assembled from two ring-shaped tetramers. Expressed in roots, leaves, stems and siliques.

The catalysed reaction is 7,8-dihydroneopterin = 6-hydroxymethyl-7,8-dihydropterin + glycolaldehyde. It functions in the pathway cofactor biosynthesis; tetrahydrofolate biosynthesis; 2-amino-4-hydroxy-6-hydroxymethyl-7,8-dihydropteridine diphosphate from 7,8-dihydroneopterin triphosphate: step 3/4. Its function is as follows. Catalyzes the conversion of 7,8-dihydroneopterin into 6-hydroxymethyl-7,8-dihydropterin, a biosynthetic precursor of the vitamin tetrahydrofolate. Can use L-threo-dihydroneopterin and D-erythro-dihydroneopterin as substrates for the formation of 6-hydroxymethyldihydropterin, but it can also catalyze the epimerization of carbon 2' of dihydroneopterin and dihydromonapterin. In Arabidopsis thaliana (Mouse-ear cress), this protein is Dihydroneopterin aldolase 2.